The chain runs to 180 residues: Cytidylate kinase (180 aa).

7–15 (GLPGSGTTT) contacts ATP.

The protein belongs to the cytidylate kinase family. Type 2 subfamily.

Its subcellular location is the cytoplasm. The catalysed reaction is CMP + ATP = CDP + ADP. It carries out the reaction dCMP + ATP = dCDP + ADP. The sequence is that of Cytidylate kinase from Methanosarcina acetivorans (strain ATCC 35395 / DSM 2834 / JCM 12185 / C2A).